The following is a 622-amino-acid chain: UvrABC system protein C (622 aa).

One can recognise a GIY-YIG domain in the interval 12-91 (SSPGVYIMKD…IKKYRPKYNF (80 aa)). Positions 201–236 (REILKIFRERMSAAAAAEKYEKAARFRDLIRSIEVT) constitute a UVR domain.

The protein belongs to the UvrC family. Interacts with UvrB in an incision complex.

The protein localises to the cytoplasm. In terms of biological role, the UvrABC repair system catalyzes the recognition and processing of DNA lesions. UvrC both incises the 5' and 3' sides of the lesion. The N-terminal half is responsible for the 3' incision and the C-terminal half is responsible for the 5' incision. In Geotalea daltonii (strain DSM 22248 / JCM 15807 / FRC-32) (Geobacter daltonii), this protein is UvrABC system protein C.